The sequence spans 260 residues: Thymidylate synthase (260 aa).

It participates in pyrimidine metabolism; dTTP biosynthesis. Its function is as follows. Is able to catalyze the biosynthesis of dTMP using dUMP, tetrahydrofolate and formaldehyde in vitro, i.e. a reaction equivalent to that catalyzed by bacterial thymidylate synthases (EC 2.1.1.45). However, M.jannaschii like most methanogenic Archaea lacks folates, thus the physiological cosubstrate is unknown but is likely one of the non-methylated methanopterin biosynthetic intermediates. In Methanocaldococcus jannaschii (strain ATCC 43067 / DSM 2661 / JAL-1 / JCM 10045 / NBRC 100440) (Methanococcus jannaschii), this protein is Thymidylate synthase.